The sequence spans 142 residues: Hemoglobin subunit alpha (142 aa).

The 141-residue stretch at V2–R142 folds into the Globin domain. H59 lines the O2 pocket. A heme b-binding site is contributed by H88.

Belongs to the globin family. Heterotetramer of two alpha chains and two beta chains. In terms of tissue distribution, red blood cells.

Functionally, involved in oxygen transport from the lung to the various peripheral tissues. This is Hemoglobin subunit alpha (HBA) from Aptenodytes forsteri (Emperor penguin).